The following is a 316-amino-acid chain: N-acetyl-gamma-glutamyl-phosphate reductase (316 aa).

Cys-136 is a catalytic residue.

Belongs to the NAGSA dehydrogenase family. Type 1 subfamily.

The protein resides in the cytoplasm. The catalysed reaction is N-acetyl-L-glutamate 5-semialdehyde + phosphate + NADP(+) = N-acetyl-L-glutamyl 5-phosphate + NADPH + H(+). Its pathway is amino-acid biosynthesis; L-arginine biosynthesis; N(2)-acetyl-L-ornithine from L-glutamate: step 3/4. Catalyzes the NADPH-dependent reduction of N-acetyl-5-glutamyl phosphate to yield N-acetyl-L-glutamate 5-semialdehyde. The protein is N-acetyl-gamma-glutamyl-phosphate reductase of Xanthomonas campestris pv. campestris (strain ATCC 33913 / DSM 3586 / NCPPB 528 / LMG 568 / P 25).